A 231-amino-acid chain; its full sequence is Extracellular deoxyribonuclease (231 aa).

The first 20 residues, methionine 1 to alanine 20, serve as a signal peptide directing secretion.

It belongs to the EndA/NucM nuclease family.

The protein resides in the secreted. The protein is Extracellular deoxyribonuclease (dns) of Vibrio cholerae serotype O1 (strain ATCC 39315 / El Tor Inaba N16961).